Here is a 142-residue protein sequence, read N- to C-terminus: Small ribosomal subunit protein uS11c (142 aa).

Belongs to the universal ribosomal protein uS11 family. As to quaternary structure, part of the 30S ribosomal subunit.

The protein resides in the plastid. It localises to the chloroplast. The polypeptide is Small ribosomal subunit protein uS11c (Welwitschia mirabilis (Tree tumbo)).